The sequence spans 433 residues: Histidinol dehydrogenase (433 aa).

Positions 236, 258, and 261 each coordinate substrate. 2 residues coordinate Zn(2+): Gln-258 and His-261. Residues Glu-325 and His-326 each act as proton acceptor in the active site. Positions 326, 359, 413, and 418 each coordinate substrate. Residue Asp-359 coordinates Zn(2+). His-418 lines the Zn(2+) pocket.

Belongs to the histidinol dehydrogenase family. It depends on Zn(2+) as a cofactor.

It catalyses the reaction L-histidinol + 2 NAD(+) + H2O = L-histidine + 2 NADH + 3 H(+). Its pathway is amino-acid biosynthesis; L-histidine biosynthesis; L-histidine from 5-phospho-alpha-D-ribose 1-diphosphate: step 9/9. Functionally, catalyzes the sequential NAD-dependent oxidations of L-histidinol to L-histidinaldehyde and then to L-histidine. The polypeptide is Histidinol dehydrogenase (Pseudoalteromonas translucida (strain TAC 125)).